The sequence spans 134 residues: Large ribosomal subunit protein bL20 (134 aa).

The protein belongs to the bacterial ribosomal protein bL20 family.

Binds directly to 23S ribosomal RNA and is necessary for the in vitro assembly process of the 50S ribosomal subunit. It is not involved in the protein synthesizing functions of that subunit. This is Large ribosomal subunit protein bL20 from Rhizobium meliloti (strain 1021) (Ensifer meliloti).